The chain runs to 295 residues: Deoxyuridine 5'-triphosphate nucleotidohydrolase (295 aa).

Residue 178–180 (RSG) participates in substrate binding. The segment covering 260–272 (NSVRKHTHEDNPV) has biased composition (basic and acidic residues). The segment at 260–295 (NSVRKHTHEDNPVHEPNVATASADIRGTKGLGSSGF) is disordered.

Belongs to the dUTPase family. Requires Mg(2+) as cofactor.

It carries out the reaction dUTP + H2O = dUMP + diphosphate + H(+). Involved in nucleotide metabolism: produces dUMP, the immediate precursor of thymidine nucleotides and decreases the intracellular concentration of dUTP to avoid uracil incorporation into viral DNA. This Human herpesvirus 8 type P (isolate GK18) (HHV-8) protein is Deoxyuridine 5'-triphosphate nucleotidohydrolase.